A 436-amino-acid polypeptide reads, in one-letter code: Glutamyl-tRNA reductase (436 aa).

Substrate is bound by residues 49 to 52 (TCNR), Ser-118, 123 to 125 (EPQ), and Gln-129. Cys-50 functions as the Nucleophile in the catalytic mechanism. NADP(+) is bound at residue 203–208 (GAGETI).

Belongs to the glutamyl-tRNA reductase family. Homodimer.

The catalysed reaction is (S)-4-amino-5-oxopentanoate + tRNA(Glu) + NADP(+) = L-glutamyl-tRNA(Glu) + NADPH + H(+). The protein operates within porphyrin-containing compound metabolism; protoporphyrin-IX biosynthesis; 5-aminolevulinate from L-glutamyl-tRNA(Glu): step 1/2. Catalyzes the NADPH-dependent reduction of glutamyl-tRNA(Glu) to glutamate 1-semialdehyde (GSA). The protein is Glutamyl-tRNA reductase of Actinobacillus pleuropneumoniae serotype 7 (strain AP76).